Here is a 180-residue protein sequence, read N- to C-terminus: MNTFATLAVLFCACLIGNCHGGYGGGGHGGYVQQGSYGQRSNGGAASAASSAAAAGNQRPVEIIAGGPRGGYGHGHEILRPIQLGYGGHSQRVPQHGSYGRRSGYGPRWTVQPAGATLLYPGQNNYRAYVSPPEYTKVVLPVRPAEPVAKLYIPENHYGSQQNYGTYAPQQSYNVEGPRY.

Residues 1-21 (MNTFATLAVLFCACLIGNCHG) form the signal peptide.

It belongs to the chorion protein S19 family.

Its subcellular location is the secreted. Functionally, chorion membrane (egg shell) protein; plays a role in protecting the egg from the environment. The protein is Chorion protein S19 (Cp19) of Drosophila subobscura (Fruit fly).